Consider the following 189-residue polypeptide: Crossover junction endodeoxyribonuclease RuvC (189 aa).

Active-site residues include Asp11, Glu71, and Asp143. Residues Asp11, Glu71, and Asp143 each coordinate Mg(2+).

It belongs to the RuvC family. In terms of assembly, homodimer which binds Holliday junction (HJ) DNA. The HJ becomes 2-fold symmetrical on binding to RuvC with unstacked arms; it has a different conformation from HJ DNA in complex with RuvA. In the full resolvosome a probable DNA-RuvA(4)-RuvB(12)-RuvC(2) complex forms which resolves the HJ. Requires Mg(2+) as cofactor.

The protein localises to the cytoplasm. The enzyme catalyses Endonucleolytic cleavage at a junction such as a reciprocal single-stranded crossover between two homologous DNA duplexes (Holliday junction).. Its function is as follows. The RuvA-RuvB-RuvC complex processes Holliday junction (HJ) DNA during genetic recombination and DNA repair. Endonuclease that resolves HJ intermediates. Cleaves cruciform DNA by making single-stranded nicks across the HJ at symmetrical positions within the homologous arms, yielding a 5'-phosphate and a 3'-hydroxyl group; requires a central core of homology in the junction. The consensus cleavage sequence is 5'-(A/T)TT(C/G)-3'. Cleavage occurs on the 3'-side of the TT dinucleotide at the point of strand exchange. HJ branch migration catalyzed by RuvA-RuvB allows RuvC to scan DNA until it finds its consensus sequence, where it cleaves and resolves the cruciform DNA. The sequence is that of Crossover junction endodeoxyribonuclease RuvC from Methylorubrum populi (strain ATCC BAA-705 / NCIMB 13946 / BJ001) (Methylobacterium populi).